Here is a 247-residue protein sequence, read N- to C-terminus: Syntaxin-like protein fsv1 (247 aa).

A coiled-coil region spans residues 27 to 94 (NPDEEIESSL…FEKQRRASSI (68 aa)). The interval 88–130 (QRRASSIPADGTSAFSANPQVASTNNKLTPLPSLQKTTSSSEG) is disordered. Residues 100–130 (SAFSANPQVASTNNKLTPLPSLQKTTSSSEG) show a composition bias toward polar residues. The t-SNARE coiled-coil homology domain occupies 159-221 (QQMLNEQEES…DHAKNRLNKV (63 aa)).

It localises to the golgi apparatus membrane. It is found in the prevacuolar compartment membrane. Functionally, involved in vesicle-mediated protein transport between the Golgi and the vacuole. In Schizosaccharomyces pombe (strain 972 / ATCC 24843) (Fission yeast), this protein is Syntaxin-like protein fsv1 (fsv1).